The chain runs to 371 residues: Enterobactin C-glucosyltransferase (371 aa).

It belongs to the glycosyltransferase 28 family.

It localises to the cytoplasm. The enzyme catalyses enterobactin + UDP-alpha-D-glucose = monoglucosyl-enterobactin + UDP. It carries out the reaction monoglucosyl-enterobactin + UDP-alpha-D-glucose = diglucosyl-enterobactin + UDP + H(+). It catalyses the reaction diglucosyl-enterobactin + UDP-alpha-D-glucose = triglucosyl-enterobactin + UDP + H(+). The protein operates within siderophore biosynthesis; enterobactin biosynthesis. Catalyzes the successive monoglucosylation, diglucosylation and triglucosylation of enterobactin (Ent). Transfers glucosyl groups from uridine-5'-diphosphoglucose (UDP-Glc) to C5 of one, two or three of the 2,3-dihydroxybenzoyl (DHB) units of Ent to yield monoglucosyl-C-Ent (MGE), diglucosyl-C-Ent (DGE) and triglucosyl-C-Ent (TGE). Glucosylation decreases the membrane affinity of Ent and increases the iron acquisition rate. The sequence is that of Enterobactin C-glucosyltransferase from Escherichia coli O6:H1 (strain CFT073 / ATCC 700928 / UPEC).